The following is a 480-amino-acid chain: Iroquois-class homeodomain protein IRX-1 (480 aa).

Residues 125-188 (YGDPGRPKNA…ANARRRLKKE (64 aa)) constitute a DNA-binding region (homeobox; TALE-type). Disordered stretches follow at residues 190–268 (KVTW…QGSP), 280–354 (SPLG…PLQH), and 401–480 (PHGP…LPSA). Residues 210–228 (TEGDPEKAEDDEEIDLESI) are compositionally biased toward acidic residues. Residues 229 to 239 (DIDKIDEHDGD) show a composition bias toward basic and acidic residues. Serine 241 is modified (phosphoserine). Composition is skewed to low complexity over residues 252–262 (PHAPAAPSALA) and 340–351 (HPGAHGPSAGAP). Over residues 404-417 (PHLPAPPPPQPPVA) the composition is skewed to pro residues.

Belongs to the TALE/IRO homeobox family.

Its subcellular location is the nucleus. The chain is Iroquois-class homeodomain protein IRX-1 (IRX1) from Homo sapiens (Human).